The primary structure comprises 209 residues: Pyridoxine/pyridoxamine 5'-phosphate oxidase (209 aa).

Substrate contacts are provided by residues 7–10 (RADY) and lysine 64. Residues 59 to 64 (RIVLLK), 74 to 75 (FT), and lysine 81 each bind FMN. Substrate-binding residues include tyrosine 121, arginine 125, and serine 129. FMN is bound by residues 138–139 (QS), tryptophan 182, and arginine 192.

The protein belongs to the pyridoxamine 5'-phosphate oxidase family. Homodimer. It depends on FMN as a cofactor.

It catalyses the reaction pyridoxamine 5'-phosphate + O2 + H2O = pyridoxal 5'-phosphate + H2O2 + NH4(+). The catalysed reaction is pyridoxine 5'-phosphate + O2 = pyridoxal 5'-phosphate + H2O2. It functions in the pathway cofactor metabolism; pyridoxal 5'-phosphate salvage; pyridoxal 5'-phosphate from pyridoxamine 5'-phosphate: step 1/1. The protein operates within cofactor metabolism; pyridoxal 5'-phosphate salvage; pyridoxal 5'-phosphate from pyridoxine 5'-phosphate: step 1/1. In terms of biological role, catalyzes the oxidation of either pyridoxine 5'-phosphate (PNP) or pyridoxamine 5'-phosphate (PMP) into pyridoxal 5'-phosphate (PLP). The sequence is that of Pyridoxine/pyridoxamine 5'-phosphate oxidase from Haemophilus ducreyi (strain 35000HP / ATCC 700724).